The sequence spans 350 residues: Biotin synthase (350 aa).

Residues 38 to 256 (NHVQVSTLLS…IAIARIMMPQ (219 aa)) form the Radical SAM core domain. Residues Cys-53, Cys-57, and Cys-60 each contribute to the [4Fe-4S] cluster site. The [2Fe-2S] cluster site is built by Cys-97, Cys-128, Cys-188, and Arg-260.

This sequence belongs to the radical SAM superfamily. Biotin synthase family. Homodimer. [4Fe-4S] cluster serves as cofactor. [2Fe-2S] cluster is required as a cofactor.

It catalyses the reaction (4R,5S)-dethiobiotin + (sulfur carrier)-SH + 2 reduced [2Fe-2S]-[ferredoxin] + 2 S-adenosyl-L-methionine = (sulfur carrier)-H + biotin + 2 5'-deoxyadenosine + 2 L-methionine + 2 oxidized [2Fe-2S]-[ferredoxin]. It functions in the pathway cofactor biosynthesis; biotin biosynthesis; biotin from 7,8-diaminononanoate: step 2/2. Catalyzes the conversion of dethiobiotin (DTB) to biotin by the insertion of a sulfur atom into dethiobiotin via a radical-based mechanism. The chain is Biotin synthase from Vibrio parahaemolyticus serotype O3:K6 (strain RIMD 2210633).